The following is a 1084-amino-acid chain: Probable sucrose-phosphate synthase 1 (1084 aa).

A compositionally biased stretch (gly residues) spans 25 to 46; it reads GGGGGGGGGGGGGGGGGGGGGV. The interval 25 to 61 is disordered; the sequence is GGGGGGGGGGGGGGGGGGGGGVDPRSPAAGAASPRGP. Positions 48–61 are enriched in low complexity; sequence PRSPAAGAASPRGP.

Belongs to the glycosyltransferase 1 family. In terms of assembly, homodimer or homotetramer. As to expression, expressed in leaves mesophyll cells, scutellum of germinating seedlings and pollen of immature inflorescences.

It catalyses the reaction beta-D-fructose 6-phosphate + UDP-alpha-D-glucose = sucrose 6(F)-phosphate + UDP + H(+). Its pathway is glycan biosynthesis; sucrose biosynthesis; sucrose from D-fructose 6-phosphate and UDP-alpha-D-glucose: step 1/2. Its activity is regulated as follows. Activity is regulated by phosphorylation and moderated by concentration of metabolites and light. Its function is as follows. Plays a role in photosynthetic sucrose synthesis by catalyzing the rate-limiting step of sucrose biosynthesis from UDP-glucose and fructose- 6-phosphate. Involved in the regulation of carbon partitioning in the leaves of plants. May regulate the synthesis of sucrose and therefore play a major role as a limiting factor in the export of photoassimilates out of the leaf. Plays a role for sucrose availability that is essential for plant growth and fiber elongation. This is Probable sucrose-phosphate synthase 1 (SPS1) from Oryza sativa subsp. indica (Rice).